Here is a 359-residue protein sequence, read N- to C-terminus: 3-dehydroquinate synthase (359 aa).

Residues 105–109 (GVVGD), 129–130 (TT), Lys-142, Lys-151, and 169–172 (TIKT) each bind NAD(+). Positions 184, 247, and 263 each coordinate Zn(2+).

The protein belongs to the sugar phosphate cyclases superfamily. Dehydroquinate synthase family. It depends on Co(2+) as a cofactor. Zn(2+) serves as cofactor. The cofactor is NAD(+).

Its subcellular location is the cytoplasm. It carries out the reaction 7-phospho-2-dehydro-3-deoxy-D-arabino-heptonate = 3-dehydroquinate + phosphate. It participates in metabolic intermediate biosynthesis; chorismate biosynthesis; chorismate from D-erythrose 4-phosphate and phosphoenolpyruvate: step 2/7. Functionally, catalyzes the conversion of 3-deoxy-D-arabino-heptulosonate 7-phosphate (DAHP) to dehydroquinate (DHQ). The sequence is that of 3-dehydroquinate synthase from Ruminiclostridium cellulolyticum (strain ATCC 35319 / DSM 5812 / JCM 6584 / H10) (Clostridium cellulolyticum).